Here is an 82-residue protein sequence, read N- to C-terminus: RNA-binding protein Hfq (82 aa).

In terms of domain architecture, Sm spans 11–72 (DTFLNAVRKS…ISTIAPSAPV (62 aa)).

The protein belongs to the Hfq family. In terms of assembly, homohexamer.

RNA chaperone that binds small regulatory RNA (sRNAs) and mRNAs to facilitate mRNA translational regulation in response to envelope stress, environmental stress and changes in metabolite concentrations. Also binds with high specificity to tRNAs. The polypeptide is RNA-binding protein Hfq (Hyphomonas neptunium (strain ATCC 15444)).